Consider the following 340-residue polypeptide: HTH-type transcriptional regulator PtxS (340 aa).

Residues 12 to 67 (VTINQVAEAAGVSKASVSRYIGGDRQLLADATARRIERAIDQLDYRPNQMARGLKR) form the HTH lacI-type domain. Residues 14–33 (INQVAEAAGVSKASVSRYIG) constitute a DNA-binding region (H-T-H motif).

As to quaternary structure, interacts with PtxR in the absence of 2-ketogluconate. Binding of the 2-ketogluconate effector to PtxS causes PtxS/PtxR complex dissociation.

2-ketogluconate acts as a molecular effector and causes dissociation of the PtxS/PtxR complex. Its function is as follows. Negatively regulates glucose metabolism by binding directly to the promoter region of the kgu and gad operons. It also negatively regulates its own synthesis. In terms of biological role, in addition, in pathogenic strains, PtxS modulates PtxR activity in response to 2-ketogluconate. In the presence of PtxR, which also binds to the kgu and gad promoter regions, PtxS and PtxR form a tight complex, creating a DNA-loop that prevents RNA polymerase promoter access and expression of the glucose metabolism genes. Binding of the 2-ketogluconate effector to PtxS causes PtxS/PtxR complex dissociation and leads to the dissolution of the repression DNA-loop, facilitating the entry of the RNA polymerase and enabling the transcription of the genes. Also plays an important role in the regulation of the expression of the virulence factor exotoxin A (toxA). PtxS does not bind directly to the toxA promoter but negatively regulates the production of exotoxin A by binding to PtxR and interfering with its positive regulator activity. In the presence of 2-ketogluconate, PtxS is released and PtxR can recruit RNA polymerase. The protein is HTH-type transcriptional regulator PtxS of Pseudomonas aeruginosa (strain ATCC 15692 / DSM 22644 / CIP 104116 / JCM 14847 / LMG 12228 / 1C / PRS 101 / PAO1).